The chain runs to 502 residues: Sulfate adenylyltransferase (502 aa).

The tract at residues 1 to 167 (MPSPHGGVLQ…LEAIQLPVHY (167 aa)) is N-terminal. Positions 168–393 (DYPGWRKTPA…LRESNPSRPK (226 aa)) are catalytic. Position 195 (Q195) interacts with sulfate. ATP contacts are provided by residues 195–198 (QTRN) and 289–292 (GRDH). Catalysis depends on residues T196, R197, and N198. R197 provides a ligand contact to sulfate. A sulfate-binding site is contributed by A293. Residue V331 coordinates ATP. Residues 394 to 502 (QGFALVLSET…FLEDQGFFQF (109 aa)) form a required for oligomerization; adenylyl-sulfate kinase-like region.

This sequence belongs to the sulfate adenylyltransferase family. Homohexamer. Dimer of trimers.

Its subcellular location is the cytoplasm. The catalysed reaction is sulfate + ATP + H(+) = adenosine 5'-phosphosulfate + diphosphate. It participates in sulfur metabolism; hydrogen sulfide biosynthesis; sulfite from sulfate: step 1/3. In terms of biological role, catalyzes the first intracellular reaction of sulfate assimilation, forming adenosine-5'-phosphosulfate (APS) from inorganic sulfate and ATP. Plays an important role in sulfate activation as a component of the biosynthesis pathway of sulfur-containing amino acids. The chain is Sulfate adenylyltransferase from Kluyveromyces lactis (strain ATCC 8585 / CBS 2359 / DSM 70799 / NBRC 1267 / NRRL Y-1140 / WM37) (Yeast).